A 908-amino-acid chain; its full sequence is Low affinity vacuolar monovalent cation/H(+) antiporter (908 aa).

Over residues 1–15 (MAKNNHISASGNSTS) the composition is skewed to polar residues. Residues 1–20 (MAKNNHISASGNSTSGDHRL) are disordered. At 1-244 (MAKNNHISAS…WEVTCSNVLW (244 aa)) the chain is on the cytoplasmic side. Threonine 26 bears the Phosphothreonine mark. Serine 32 carries the phosphoserine modification. A Phosphothreonine modification is found at threonine 33. The disordered stretch occupies residues 68 to 147 (NKSKRSVSSQ…DDEDANDDSR (80 aa)). The span at 73–87 (SVSSQSPIVHSSNNT) shows a compositional bias: low complexity. Polar residues predominate over residues 102–121 (ESLSSKSHSVPDLNTATPSS). At serine 110 the chain carries Phosphoserine. Residue threonine 118 is modified to Phosphothreonine. Serine 121 is modified (phosphoserine). The helical transmembrane segment at 245–265 (FILFGFPIAILFYSAAIVVFL) threads the bilayer. At 266–408 (LGGGGLVTNS…GRVLFYTIFH (143 aa)) the chain is on the vacuolar side. Asparagine 361 carries N-linked (GlcNAc...) asparagine glycosylation. The chain crosses the membrane as a helical span at residues 409–429 (LVLQPILAVLSLCLWLLVFTI). Over 430 to 494 (PMSNVLWQIM…HYYKYTVDGT (65 aa)) the chain is Cytoplasmic. Residues 495-515 (NVIVVNLISIVFFTIFDFYVL) form a helical membrane-spanning segment. Over 516 to 530 (KNFLHWKTWFTYESS) the chain is Vacuolar. A helical membrane pass occupies residues 531-551 (IFILCLTSTIPLAFYIGQAVA). The Cytoplasmic portion of the chain corresponds to 552 to 560 (SISAQTSMG). The helical transmembrane segment at 561–581 (VGAVINAFFSTIVEIFLYCVA) threads the bilayer. Topologically, residues 582-587 (LQQKKG) are vacuolar. The chain crosses the membrane as a helical span at residues 588 to 608 (LLVEGSMIGSILGAVLLLPGL). Residues 609 to 626 (SMCGGALNRKTQRYNPAS) are Cytoplasmic-facing. A helical membrane pass occupies residues 627 to 647 (AGVSSALLIFSMIVMFVPTVL). Topologically, residues 648–686 (YEIYGGYSVNCADGANDRDCTFSHPPLKFNRLFTHVIQP) are vacuolar. A helical transmembrane segment spans residues 687-707 (MSISCAIVLFCAYIIGLWFTL). Over 708 to 746 (RTHAKMIWQLPIADPTSTAPEQQEQNSHDAPNWSRSKST) the chain is Cytoplasmic. The helical transmembrane segment at 747–767 (CILLMSTLLYAIIAEILVSCV) threads the bilayer. The Vacuolar segment spans residues 768 to 783 (DAVLEDIPSLNPKFLG). The chain crosses the membrane as a helical span at residues 784–804 (LTIFALIPNTTEFLNAISFAI). Topologically, residues 805-816 (HGNVALSMEIGS) are cytoplasmic. The helical transmembrane segment at 817 to 837 (AYALQVCLLQIPSLVIYSIFY) threads the bilayer. Topologically, residues 838–851 (TWNVKKSMINIRTQ) are vacuolar. A helical membrane pass occupies residues 852 to 872 (MFPLVFPRWDIFGAMTSVFMF). At 873 to 885 (TYLYAEGKSNYFK) the chain is on the cytoplasmic side. Residues 886–906 (GSMLILLYIIIVVGFYFQGAL) form a helical membrane-spanning segment. The Vacuolar segment spans residues 907-908 (SE).

This sequence belongs to the Ca(2+):cation antiporter (CaCA) (TC 2.A.19) family.

Its subcellular location is the vacuole membrane. Functionally, has a role in promoting intracellular monovalent cation sequestration via the exchange of monovalent cations and especially Na(+) for hydrogen ions across the vacuolar membrane. This is Low affinity vacuolar monovalent cation/H(+) antiporter (VNX1) from Saccharomyces cerevisiae (strain ATCC 204508 / S288c) (Baker's yeast).